Here is a 609-residue protein sequence, read N- to C-terminus: Isocitrate dehydrogenase kinase/phosphatase (609 aa).

ATP-binding positions include 325-331 (APGIKGM) and Lys-346. Residue Asp-381 is part of the active site.

It belongs to the AceK family.

The protein localises to the cytoplasm. The enzyme catalyses L-seryl-[isocitrate dehydrogenase] + ATP = O-phospho-L-seryl-[isocitrate dehydrogenase] + ADP + H(+). Functionally, bifunctional enzyme which can phosphorylate or dephosphorylate isocitrate dehydrogenase (IDH) on a specific serine residue. This is a regulatory mechanism which enables bacteria to bypass the Krebs cycle via the glyoxylate shunt in response to the source of carbon. When bacteria are grown on glucose, IDH is fully active and unphosphorylated, but when grown on acetate or ethanol, the activity of IDH declines drastically concomitant with its phosphorylation. In Acidovorax sp. (strain JS42), this protein is Isocitrate dehydrogenase kinase/phosphatase.